A 128-amino-acid polypeptide reads, in one-letter code: Crossover junction endodeoxyribonuclease Hjc (128 aa).

Glutamate 10 contributes to the Mg(2+) binding site. Serine 30 is a catalytic residue. Positions 34 and 47 each coordinate Mg(2+).

Belongs to the Holliday junction resolvase Hjc family. In terms of assembly, homodimer. Mg(2+) is required as a cofactor.

The enzyme catalyses Endonucleolytic cleavage at a junction such as a reciprocal single-stranded crossover between two homologous DNA duplexes (Holliday junction).. Functionally, a structure-specific endonuclease that resolves Holliday junction (HJ) intermediates during genetic recombination. Cleaves 4-way DNA junctions introducing paired nicks in opposing strands, leaving a 5'-terminal phosphate and a 3'-terminal hydroxyl group that are subsequently ligated to produce recombinant products. The polypeptide is Crossover junction endodeoxyribonuclease Hjc (Thermococcus kodakarensis (strain ATCC BAA-918 / JCM 12380 / KOD1) (Pyrococcus kodakaraensis (strain KOD1))).